The sequence spans 568 residues: Urease subunit alpha (568 aa).

The Urease domain maps to 133-568 (GGVDTHIHFI…LPLAQKYFLF (436 aa)). Positions 138, 140, and 221 each coordinate Ni(2+). Lysine 221 carries the N6-carboxylysine modification. Histidine 223 contributes to the substrate binding site. Positions 250 and 276 each coordinate Ni(2+). The active-site Proton donor is the histidine 324. Position 364 (aspartate 364) interacts with Ni(2+).

It belongs to the metallo-dependent hydrolases superfamily. Urease alpha subunit family. Heterohexamer of 3 UreC (alpha) and 3 UreAB (gamma/beta) subunits. Ni cation serves as cofactor. Post-translationally, carboxylation allows a single lysine to coordinate two nickel ions.

The protein localises to the cytoplasm. It catalyses the reaction urea + 2 H2O + H(+) = hydrogencarbonate + 2 NH4(+). It functions in the pathway nitrogen metabolism; urea degradation; CO(2) and NH(3) from urea (urease route): step 1/1. In Deinococcus radiodurans (strain ATCC 13939 / DSM 20539 / JCM 16871 / CCUG 27074 / LMG 4051 / NBRC 15346 / NCIMB 9279 / VKM B-1422 / R1), this protein is Urease subunit alpha.